A 522-amino-acid chain; its full sequence is Cytochrome P450 9c1 (522 aa).

A heme-binding site is contributed by C464.

Belongs to the cytochrome P450 family. Heme is required as a cofactor.

It is found in the endoplasmic reticulum membrane. The protein localises to the microsome membrane. In terms of biological role, may be involved in the metabolism of insect hormones and in the breakdown of synthetic insecticides. The chain is Cytochrome P450 9c1 (Cyp9c1) from Drosophila melanogaster (Fruit fly).